The primary structure comprises 260 residues: Putative ABC transporter ATP-binding protein SCO3161 (260 aa).

In terms of domain architecture, ABC transporter spans 16-246; that stretch reads LDVSGLAFAY…DDLMRAHRLE (231 aa). Residue 49-56 coordinates ATP; it reads GPNGAGKT.

The protein belongs to the ABC transporter superfamily.

The protein localises to the cell membrane. In terms of biological role, probably part of an ABC transporter complex. Responsible for energy coupling to the transport system. The protein is Putative ABC transporter ATP-binding protein SCO3161 of Streptomyces coelicolor (strain ATCC BAA-471 / A3(2) / M145).